A 191-amino-acid polypeptide reads, in one-letter code: Protein phosphatase inhibitor 2 (191 aa).

The segment covering Glu-20–Glu-31 has biased composition (basic and acidic residues). 2 disordered regions span residues Glu-20 to Ala-52 and Arg-67 to Ile-191. Phosphoserine is present on residues Ser-45 and Ser-47. Positions Ser-93–Gly-109 are enriched in acidic residues. A compositionally biased stretch (basic and acidic residues) spans Lys-114–Arg-136.

Interacts with protein phosphatase 1. Interacts with TOPP1, SRK2D/SNRK2.2, SRK2I/SNRK2.3, SRK2E/SNRK2.6, SRK2C/SNRK2.8 and PYL11. Phosphorylated in vivo. Expressed in roots, cotyledons, leaves, flowers and siliques.

It is found in the nucleus. It localises to the cytoplasm. Functionally, inhibitor of protein-phosphatase 1 (PP1). Binds to and inhibits PP1 activity. Acts as negative regulator of abscisic acid (ABA) signaling. Enhances the inhibition of SRK2E/SNRK2.6 by TOPP1. May promote the interaction between TOPP1 and the ABA receptor PYL11. The sequence is that of Protein phosphatase inhibitor 2 from Arabidopsis thaliana (Mouse-ear cress).